Consider the following 211-residue polypeptide: UPF0637 protein ABC2405 (211 aa).

This sequence belongs to the UPF0637 family.

This Shouchella clausii (strain KSM-K16) (Alkalihalobacillus clausii) protein is UPF0637 protein ABC2405.